Reading from the N-terminus, the 225-residue chain is ATP synthase subunit a (225 aa).

Transmembrane regions (helical) follow at residues L16 to L36, L79 to F99, S105 to I125, L176 to L196, and V202 to I222.

This sequence belongs to the ATPase A chain family. F-type ATPases have 2 components, CF(1) - the catalytic core - and CF(0) - the membrane proton channel. CF(1) has five subunits: alpha(3), beta(3), gamma(1), delta(1), epsilon(1). CF(0) has three main subunits: a(1), b(2) and c(9-12). The alpha and beta chains form an alternating ring which encloses part of the gamma chain. CF(1) is attached to CF(0) by a central stalk formed by the gamma and epsilon chains, while a peripheral stalk is formed by the delta and b chains.

Its subcellular location is the cell inner membrane. Its function is as follows. Key component of the proton channel; it plays a direct role in the translocation of protons across the membrane. In Campylobacter curvus (strain 525.92), this protein is ATP synthase subunit a.